The chain runs to 512 residues: Ascofuranone/ascochlorin biosynthesis clusters transcription regulator (512 aa).

A DNA-binding region (zn(2)-C6 fungal-type) is located at residues 14–49 (CDRCHSQKLRCPRSVEPEKANPEEPCSRCRKAGVPC). Disordered stretches follow at residues 54-87 (RGKVGRPSKATKKKSARSPRATSTPEAEFPPYDI), 118-148 (GSGSVTTSASPKTMAEDYQPEGQRPFPDPLM), and 325-351 (GCTRSSSRASTTSKGSSMESDEGDGSI). A compositionally biased stretch (basic residues) spans 56-70 (KVGRPSKATKKKSAR). Composition is skewed to low complexity over residues 118 to 127 (GSGSVTTSAS) and 327 to 342 (TRSSSRASTTSKGSSM).

Its subcellular location is the nucleus. In terms of biological role, transcription factor that regulates the expression of the asc-1 and asc-2 gene clusters that mediate the biosynthesis of both ascochlorin and ascofuranone, a strong inhibitor of cyanide-insensitive alternative oxidases and a promising drug candidate against African trypanosomiasis. Binds the 5'-CGGYGNNTTW-3' motif within promoters of the target genes. This is Ascofuranone/ascochlorin biosynthesis clusters transcription regulator from Acremonium egyptiacum (Oospora egyptiaca).